Here is a 131-residue protein sequence, read N- to C-terminus: Global transcriptional regulator Spx 1 (131 aa).

An intrachain disulfide couples Cys-10 to Cys-13.

The protein belongs to the ArsC family. Spx subfamily. Interacts with the C-terminal domain of the alpha subunit of the RNAP.

It localises to the cytoplasm. Its function is as follows. Global transcriptional regulator that plays a key role in stress response and exerts either positive or negative regulation of genes. Acts by interacting with the C-terminal domain of the alpha subunit of the RNA polymerase (RNAP). This interaction can enhance binding of RNAP to the promoter region of target genes and stimulate their transcription, or block interaction of RNAP with activator. The sequence is that of Global transcriptional regulator Spx 1 from Bacillus anthracis.